The sequence spans 291 residues: Translocon-associated protein subunit alpha (291 aa).

Positions 1–20 are cleaved as a signal peptide; sequence MRLLPRLLLLLLLVFPATVL. Over 21–207 the chain is Lumenal; that stretch reads FRGGPRGSLA…EREDGLDGET (187 aa). The disordered stretch occupies residues 34 to 83; the sequence is DLTEDEETVEDSIIEDEDDEAEVEEDEPTDLVEDKEEEDVSGEPEASPSA. The segment covering 35-75 has biased composition (acidic residues); it reads LTEDEETVEDSIIEDEDDEAEVEEDEPTDLVEDKEEEDVSG. N136 and N191 each carry an N-linked (GlcNAc...) asparagine glycan. A helical membrane pass occupies residues 208–228; it reads IFMYMFLAGLGLLVIVGLHQL. Topologically, residues 229-291 are cytoplasmic; the sequence is LESRKRKRPV…AQKRSVGSDE (63 aa). The residue at position 247 (S247) is a Phosphoserine. T260 carries the post-translational modification Phosphothreonine. The segment at 263-291 is disordered; the sequence is QIMQSRRDKASPRRLPRKRAQKRSVGSDE. S273 is modified (phosphoserine). Basic residues predominate over residues 274–284; the sequence is PRRLPRKRAQK.

This sequence belongs to the TRAP-alpha family. Heterotetramer of TRAP-alpha, TRAP-beta, TRAP-delta and TRAP-gamma. Interacts with palmitoylated calnexin (CALX), the interaction is required for efficient folding of glycosylated proteins. In terms of processing, phosphorylated in its cytoplasmic tail.

Its subcellular location is the endoplasmic reticulum membrane. TRAP proteins are part of a complex whose function is to bind calcium to the ER membrane and thereby regulate the retention of ER resident proteins. May be involved in the recycling of the translocation apparatus after completion of the translocation process or may function as a membrane-bound chaperone facilitating folding of translocated proteins. This is Translocon-associated protein subunit alpha (SSR1) from Pongo abelii (Sumatran orangutan).